The following is a 194-amino-acid chain: Putative manganese efflux pump MntP (194 aa).

6 helical membrane-spanning segments follow: residues 2–22 (TPGA…AAAV), 40–60 (FVFG…GLVA), 67–87 (VDHW…IWEA), 107–129 (ALIA…LAFI), 133–155 (IWVI…MLIG), and 168–188 (LIGG…HTGV).

The protein belongs to the MntP (TC 9.B.29) family.

It localises to the cell inner membrane. Functionally, probably functions as a manganese efflux pump. The protein is Putative manganese efflux pump MntP of Rhodopseudomonas palustris (strain BisA53).